The primary structure comprises 217 residues: Transcriptional regulator NovE (217 aa).

The interval M1–G41 is disordered.

Its function is as follows. Transcription regulator that specifically regulates expression of genes involved in the novobiocin biosynthesis pathway. Probably acts as a positive regulator of transcription. Does not bind DNA. This chain is Transcriptional regulator NovE (novE), found in Streptomyces niveus (Streptomyces spheroides).